A 309-amino-acid chain; its full sequence is Phytoene synthase (309 aa).

It belongs to the phytoene/squalene synthase family. ATP is required as a cofactor. Requires Mn(2+) as cofactor. Mg(2+) serves as cofactor.

Its pathway is carotenoid biosynthesis; phytoene biosynthesis. Involved in the biosynthesis of carotenoids. Catalyzes the condensation of two molecules of geranylgeranyl diphosphate (GGPP) to give prephytoene diphosphate (PPPP) and the subsequent rearrangement of the cyclopropylcarbinyl intermediate to yield phytoene. This Pseudescherichia vulneris (Escherichia vulneris) protein is Phytoene synthase (crtB).